Consider the following 479-residue polypeptide: Aspartyl/glutamyl-tRNA(Asn/Gln) amidotransferase subunit B (479 aa).

The protein belongs to the GatB/GatE family. GatB subfamily. Heterotrimer of A, B and C subunits.

It catalyses the reaction L-glutamyl-tRNA(Gln) + L-glutamine + ATP + H2O = L-glutaminyl-tRNA(Gln) + L-glutamate + ADP + phosphate + H(+). The enzyme catalyses L-aspartyl-tRNA(Asn) + L-glutamine + ATP + H2O = L-asparaginyl-tRNA(Asn) + L-glutamate + ADP + phosphate + 2 H(+). In terms of biological role, allows the formation of correctly charged Asn-tRNA(Asn) or Gln-tRNA(Gln) through the transamidation of misacylated Asp-tRNA(Asn) or Glu-tRNA(Gln) in organisms which lack either or both of asparaginyl-tRNA or glutaminyl-tRNA synthetases. The reaction takes place in the presence of glutamine and ATP through an activated phospho-Asp-tRNA(Asn) or phospho-Glu-tRNA(Gln). The sequence is that of Aspartyl/glutamyl-tRNA(Asn/Gln) amidotransferase subunit B from Streptococcus equi subsp. zooepidemicus (strain MGCS10565).